We begin with the raw amino-acid sequence, 468 residues long: MGTVHARSLDPLPMNGPDFGSPDDADLVEVEPEKKQEILENKDVVVQRVHFEGLGRTKDDLIAHEIGQVFKAKNLIEVMRKSHEAREKLLRLGVFRNVEVLIDTSEGEDAVPNGLDVTFEVTELRRLTGSYNTMVGNNEGSMVLGLKFPNLFGRAEKMTFQFSYGTKETSYGLSFFKPQVGNFERNFSVNLYKVTGQFPWSSLRETDRGVSAEINFPIWKTSHTLKWEGVWRELGCLARTASFAIREESGHTLKSSLSHTMVIDSRNASILPKRGALLKINQELAGYTGGDVSFLKEDFELQLNKQLAWDSVLSTSLWGGMLVPVGDRPSSIADRFYLGGPTSVRGFSMYSIGPQSEGDYLGGEAYWAGGVHLYTPLPFRPGRGGFGDLFRTHFFLNAGNLCNLNYGEGPRAHLQRLAECIRWSYGAGLVLRLGNIARLELNYCIPMGVQSGDRICDGVQFGAGIRFL.

The disordered stretch occupies residues 1-25 (MGTVHARSLDPLPMNGPDFGSPDDA). The POTRA domain occupies 44–124 (VVVQRVHFEG…LDVTFEVTEL (81 aa)).

It belongs to the SAM50/omp85 family. Associates with the mitochondrial contact site and cristae organizing system (MICOS) complex (also known as MINOS or MitOS complex).

The protein localises to the mitochondrion outer membrane. In terms of biological role, may play a role in the maintenance of the structure of mitochondrial cristae. This chain is Sorting and assembly machinery component 50 homolog B (samm50-b), found in Xenopus laevis (African clawed frog).